The sequence spans 492 residues: Cytoplasmic dynein 1 light intermediate chain 2 (492 aa).

61 to 68 serves as a coordination point for ATP; the sequence is GEDGSGKT. Disordered stretches follow at residues 187–206, 371–423, and 437–492; these read PEEGCQGSPQRRGPLTSGSD, AKQP…KNNA, and LSKK…ENEA. Serine 194 carries the phosphoserine modification. A compositionally biased stretch (polar residues) spans 371–381; sequence AKQPATPTRAS. A phosphoserine mark is found at serine 383 and serine 391. An Omega-N-methylarginine modification is found at arginine 397. Positions 400–412 are enriched in low complexity; it reads PASVPSSSPGTSV. Threonine 441 is subject to Phosphothreonine. A phosphoserine mark is found at serine 443 and serine 446. Polar residues predominate over residues 452–469; that stretch reads VQSTAKKSGQKTVLSNVQ. Residues 471–480 are compositionally biased toward basic and acidic residues; that stretch reads ELDRMTRKPD. Over residues 482-492 the composition is skewed to polar residues; it reads MVTNSSTENEA.

Belongs to the dynein light intermediate chain family. In terms of assembly, homodimer. The cytoplasmic dynein 1 complex consists of two catalytic heavy chains (HCs) and a number of non-catalytic subunits presented by intermediate chains (ICs), light intermediate chains (LICs) and light chains (LCs); the composition seems to vary in respect to the IC, LIC and LC composition. The heavy chain homodimer serves as a scaffold for the probable homodimeric assembly of the respective non-catalytic subunits. The ICs and LICs bind directly to the HC dimer and the LCs assemble on the IC dimer. Interacts with DYNC1H1; DYNC1LI1 and DYNC1LI2 bind mutually exclusive to DYNC1H.

The protein localises to the cytoplasm. It is found in the cytoskeleton. In terms of biological role, acts as one of several non-catalytic accessory components of the cytoplasmic dynein 1 complex that are thought to be involved in linking dynein to cargos and to adapter proteins that regulate dynein function. Cytoplasmic dynein 1 acts as a motor for the intracellular retrograde motility of vesicles and organelles along microtubules. May play a role in binding dynein to membranous organelles or chromosomes. This chain is Cytoplasmic dynein 1 light intermediate chain 2, found in Homo sapiens (Human).